The sequence spans 1066 residues: Microtubule-associated protein 1S (1066 aa).

The necessary for the microtubule-organizing center localization stretch occupies residues 1–804 (MAATVAGSGA…SESLPTLSDS (804 aa)). Residues Ser-320 and Ser-472 each carry the phosphoserine modification. The disordered stretch occupies residues 462–707 (QDMAGPRRAE…EVDESLSVSF (246 aa)). 2 stretches are compositionally biased toward basic and acidic residues: residues 466-487 (GPRR…REGR) and 500-530 (GVAR…KDPR). The residue at position 582 (Ser-582) is a Phosphoserine. Residues 597-614 (ACSSPAPQLVATPSQESS) are compositionally biased toward polar residues. Thr-647 carries the phosphothreonine modification. Phosphoserine is present on residues Ser-649, Ser-660, Ser-665, Ser-667, Ser-737, and Ser-765. Positions 656–671 (GPTESSGPLSLSPLRG) are enriched in low complexity. A necessary for interaction with RASSF1 region spans residues 676-1066 (PDASPTVTTP…EAFPACKVEF (391 aa)). A necessary for association with microtubules region spans residues 720 to 973 (EAGLSLPLCG…GGSARLVDEE (254 aa)). The interval 758–950 (PMAPAPVSPG…SRSGGSAAPP (193 aa)) is disordered. Composition is skewed to polar residues over residues 766 to 775 (PGSSNDSSAR) and 790 to 803 (PPTS…TLSD). Ser-816 carries the post-translational modification Phosphoserine. Positions 832-845 (PDPLKIPPPLPTPP) are enriched in pro residues. Low complexity-rich tracts occupy residues 880 to 894 (TTPP…AKIK) and 933 to 949 (RGPS…SAAP). Residues 967-1066 (ARLVDEEFFR…EAFPACKVEF (100 aa)) are necessary for association with actin. The segment at 974-998 (FFRRVRALCYVISGQDQHKEEGMRA) is necessary for the mitochondrial aggregation and genome destruction.

The protein belongs to the MAP1 family. In terms of assembly, heterodimer of a heavy and a light chain. Interacts with microtubules and actin. Both MAP1S heavy and light chains interact with microtubules. MAP1S light chain interacts with actin. Interacts (via C-terminus) with GAN (via Kelch domains). Interacts with ESR1, LRPPRC, RASSF1, microtubules and VCY2. Interacts with ESR1, LRPPRC, RASSF1, microtubules and VCY2. Interacts with WDR47 (via N-terminus of light chain).

The protein localises to the nucleus. The protein resides in the cytoplasm. Its subcellular location is the cytosol. It is found in the cytoskeleton. It localises to the spindle. In terms of biological role, microtubule-associated protein that mediates aggregation of mitochondria resulting in cell death and genomic destruction (MAGD). Plays a role in anchoring the microtubule organizing center to the centrosomes. Binds to DNA. Plays a role in apoptosis. Involved in the formation of microtubule bundles. This Bos taurus (Bovine) protein is Microtubule-associated protein 1S (MAP1S).